The primary structure comprises 328 residues: MIQITGRKFKLEEQVEHEDHYYARYSLSPLEKGYAVTVGNTLRRVLLSSIPSFAITDVRFVKPEKYHEFDTIEGAKEDIMDILLNLKKVQLRVDTYVESPVKLTINKKGPGVLTAGDIECPAGVVVVNPGHYLATLNEDADLEIELYATFGKGFVPAADRNERPEIGWIVLDGVYSPVIKVNWLVENVRVDKRTDYEKLILEIWTKKSIKPSEALKHSLKIILDHFMFIEQSLSDVEELPIPIIQETAVVTEEIGSPEDVMSKKVEELELSARSLNCLKRDKIETIGDLLSRTEEELMKIKNFGLKSLEEVREKLRDKFGLSLRKGDK.

Residues 1-230 are alpha N-terminal domain (alpha-NTD); sequence MIQITGRKFK…IILDHFMFIE (230 aa). Residues 257–328 form an alpha C-terminal domain (alpha-CTD) region; sequence PEDVMSKKVE…FGLSLRKGDK (72 aa).

Belongs to the RNA polymerase alpha chain family. As to quaternary structure, homodimer. The RNAP catalytic core consists of 2 alpha, 1 beta, 1 beta' and 1 omega subunit. When a sigma factor is associated with the core the holoenzyme is formed, which can initiate transcription.

It carries out the reaction RNA(n) + a ribonucleoside 5'-triphosphate = RNA(n+1) + diphosphate. DNA-dependent RNA polymerase catalyzes the transcription of DNA into RNA using the four ribonucleoside triphosphates as substrates. The protein is DNA-directed RNA polymerase subunit alpha of Fervidobacterium nodosum (strain ATCC 35602 / DSM 5306 / Rt17-B1).